The sequence spans 286 residues: uncharacterized protein (286 aa).

A run of 7 helical transmembrane segments spans residues 30 to 50 (LTFM…LTVQ), 68 to 88 (LSTI…VTAF), 99 to 119 (WFWA…GILL), 136 to 156 (IVYA…LSAL), 169 to 189 (LFHI…LSFI), 205 to 225 (IIPG…VYFV), and 254 to 274 (SALF…YFIL).

The protein resides in the cell membrane. This is an uncharacterized protein from Mycoplasma genitalium (strain ATCC 33530 / DSM 19775 / NCTC 10195 / G37) (Mycoplasmoides genitalium).